Consider the following 73-residue polypeptide: Large ribosomal subunit protein bL27c (73 aa).

It belongs to the bacterial ribosomal protein bL27 family.

It is found in the plastid. The protein resides in the chloroplast. This chain is Large ribosomal subunit protein bL27c (rpl27), found in Haptolina hirta (Plankton alga).